A 386-amino-acid polypeptide reads, in one-letter code: Lipid-A-disaccharide synthase (386 aa).

It belongs to the LpxB family.

The enzyme catalyses a lipid X + a UDP-2-N,3-O-bis[(3R)-3-hydroxyacyl]-alpha-D-glucosamine = a lipid A disaccharide + UDP + H(+). Its pathway is bacterial outer membrane biogenesis; LPS lipid A biosynthesis. In terms of biological role, condensation of UDP-2,3-diacylglucosamine and 2,3-diacylglucosamine-1-phosphate to form lipid A disaccharide, a precursor of lipid A, a phosphorylated glycolipid that anchors the lipopolysaccharide to the outer membrane of the cell. This is Lipid-A-disaccharide synthase from Chromohalobacter salexigens (strain ATCC BAA-138 / DSM 3043 / CIP 106854 / NCIMB 13768 / 1H11).